A 287-amino-acid chain; its full sequence is Protease HtpX (287 aa).

Helical transmembrane passes span 4-24 and 33-53; these read IFLL…VMSI and GGLL…SLAI. Position 139 (histidine 139) interacts with Zn(2+). Residue glutamate 140 is part of the active site. Histidine 143 contacts Zn(2+). 2 helical membrane passes run 154 to 174 and 195 to 215; these read LIQG…AGII and AVVF…VAYF. Position 220 (glutamate 220) interacts with Zn(2+).

The protein belongs to the peptidase M48B family. The cofactor is Zn(2+).

Its subcellular location is the cell inner membrane. This Shewanella pealeana (strain ATCC 700345 / ANG-SQ1) protein is Protease HtpX.